Here is a 355-residue protein sequence, read N- to C-terminus: tRNA-specific 2-thiouridylase MnmA (355 aa).

ATP-binding positions include L6 to S13 and L33. Residue C100 is the Nucleophile of the active site. A disulfide bond links C100 and C195. G123 provides a ligand contact to ATP. Residues K145–Q147 form an interaction with tRNA region. C195 serves as the catalytic Cysteine persulfide intermediate.

Belongs to the MnmA/TRMU family.

The protein localises to the cytoplasm. The catalysed reaction is S-sulfanyl-L-cysteinyl-[protein] + uridine(34) in tRNA + AH2 + ATP = 2-thiouridine(34) in tRNA + L-cysteinyl-[protein] + A + AMP + diphosphate + H(+). Its function is as follows. Catalyzes the 2-thiolation of uridine at the wobble position (U34) of tRNA, leading to the formation of s(2)U34. The sequence is that of tRNA-specific 2-thiouridylase MnmA from Borrelia garinii subsp. bavariensis (strain ATCC BAA-2496 / DSM 23469 / PBi) (Borreliella bavariensis).